The chain runs to 505 residues: L-arabinose isomerase (505 aa).

Residues glutamate 308, glutamate 335, histidine 352, and histidine 453 each contribute to the Mn(2+) site.

It belongs to the arabinose isomerase family. It depends on Mn(2+) as a cofactor.

The enzyme catalyses beta-L-arabinopyranose = L-ribulose. Its pathway is carbohydrate degradation; L-arabinose degradation via L-ribulose; D-xylulose 5-phosphate from L-arabinose (bacterial route): step 1/3. In terms of biological role, catalyzes the conversion of L-arabinose to L-ribulose. This is L-arabinose isomerase from Bifidobacterium longum (strain DJO10A).